A 209-amino-acid chain; its full sequence is Thiamine-phosphate synthase 1 (209 aa).

4-amino-2-methyl-5-(diphosphooxymethyl)pyrimidine is bound by residues 39–43 (QFREK) and Asn-74. The Mg(2+) site is built by Asp-75 and Asp-94. Ser-112 serves as a coordination point for 4-amino-2-methyl-5-(diphosphooxymethyl)pyrimidine. 2-[(2R,5Z)-2-carboxy-4-methylthiazol-5(2H)-ylidene]ethyl phosphate is bound at residue 138 to 140 (TQS). Position 141 (Lys-141) interacts with 4-amino-2-methyl-5-(diphosphooxymethyl)pyrimidine. 2-[(2R,5Z)-2-carboxy-4-methylthiazol-5(2H)-ylidene]ethyl phosphate-binding positions include Gly-170 and 190–191 (IS).

This sequence belongs to the thiamine-phosphate synthase family. Requires Mg(2+) as cofactor.

The catalysed reaction is 2-[(2R,5Z)-2-carboxy-4-methylthiazol-5(2H)-ylidene]ethyl phosphate + 4-amino-2-methyl-5-(diphosphooxymethyl)pyrimidine + 2 H(+) = thiamine phosphate + CO2 + diphosphate. It catalyses the reaction 2-(2-carboxy-4-methylthiazol-5-yl)ethyl phosphate + 4-amino-2-methyl-5-(diphosphooxymethyl)pyrimidine + 2 H(+) = thiamine phosphate + CO2 + diphosphate. It carries out the reaction 4-methyl-5-(2-phosphooxyethyl)-thiazole + 4-amino-2-methyl-5-(diphosphooxymethyl)pyrimidine + H(+) = thiamine phosphate + diphosphate. It functions in the pathway cofactor biosynthesis; thiamine diphosphate biosynthesis; thiamine phosphate from 4-amino-2-methyl-5-diphosphomethylpyrimidine and 4-methyl-5-(2-phosphoethyl)-thiazole: step 1/1. In terms of biological role, condenses 4-methyl-5-(beta-hydroxyethyl)thiazole monophosphate (THZ-P) and 2-methyl-4-amino-5-hydroxymethyl pyrimidine pyrophosphate (HMP-PP) to form thiamine monophosphate (TMP). The protein is Thiamine-phosphate synthase 1 of Streptococcus pneumoniae (strain ATCC BAA-255 / R6).